The primary structure comprises 442 residues: Protein PHYTOCHROME KINASE SUBSTRATE 2 (442 aa).

The disordered stretch occupies residues 110–130 (IFVGPKQSSKNSSETPSLRSE). Low complexity predominate over residues 121 to 130 (SSETPSLRSE). A phosphoserine mark is found at Ser239 and Ser245. The interval 394 to 442 (VSGDSYTSMNRTPSYVPRFPVEANPTSTETRRRISSSSVSHTQSPFLYT) is disordered. Polar residues predominate over residues 397–406 (DSYTSMNRTP). Residues 428–442 (SSSSVSHTQSPFLYT) are compositionally biased toward low complexity.

Belongs to the PKS family. In terms of assembly, interacts with PKS1, RPT3, PHOT1 and PHOT2. Expressed in leaves, with the strongest expression on edges of the laminas. Not found in roots.

Its subcellular location is the cell membrane. In terms of biological role, acts predominantly in the phot1 pathway. Involved in the leaf positioning and also in the phot2 pathway controlling the leaf flattening. Component of the network that modulates the very low-fluence response (VLFR) branch of phyA signaling. Regulates phytochrome-mediated photomorphogenesis and hypocotyl phototropism. May act by controlling auxin homeostasis. The polypeptide is Protein PHYTOCHROME KINASE SUBSTRATE 2 (PKS2) (Arabidopsis thaliana (Mouse-ear cress)).